We begin with the raw amino-acid sequence, 270 residues long: tRNA pseudouridine synthase A (270 aa).

Asp-60 serves as the catalytic Nucleophile. The interval 107–111 (FHARF) is RNA binding. Tyr-118 lines the substrate pocket. An interaction with tRNA region spans residues 168 to 172 (QCQSR).

The protein belongs to the tRNA pseudouridine synthase TruA family. As to quaternary structure, homodimer.

It catalyses the reaction uridine(38/39/40) in tRNA = pseudouridine(38/39/40) in tRNA. In terms of biological role, formation of pseudouridine at positions 38, 39 and 40 in the anticodon stem and loop of transfer RNAs. In Enterobacter sp. (strain 638), this protein is tRNA pseudouridine synthase A.